The following is a 385-amino-acid chain: Isocitrate dehydrogenase [NAD] subunit beta, mitochondrial (385 aa).

The N-terminal 34 residues, 1-34 (MAALSGVRWLTRALVSAGNPGAWRGLSTSAAAHA), are a transit peptide targeting the mitochondrion. Lys-199 carries the N6-acetyllysine modification.

The protein belongs to the isocitrate and isopropylmalate dehydrogenases family. As to quaternary structure, heterooligomer of subunits alpha (IDH3A), beta (IDH3B), and gamma (IDH3G) in the apparent ratio of 2:1:1. The heterodimer containing one IDH3A and one IDH3B subunit and the heterodimer containing one IDH3A and one IDH3G subunit assemble into a heterotetramer (which contains two subunits of IDH3A, one of IDH3B and one of IDH3G) and further into the heterooctamer.

The protein resides in the mitochondrion. Its activity is regulated as follows. The heterotetramer and the heterodimer composed of IDH3A and IDH3G subunits can be allosterically activated by citrate (CIT) or/and ADP, and the two activators can act independently or synergistically. The heterodimer composed of IDH3A and IDH3B subunits cannot be allosterically regulated and the allosteric regulation of the heterotetramer is through the IDH3G subunit and not the IDH3B subunit. The IDH3G subunit contains the allosteric site which consists of a CIT-binding site and an ADP-binding site, and the binding of CIT and ADP causes conformational changes at the allosteric site which are transmitted to the active site in the catalytic subunit (IDH3A) through a cascade of conformational changes at the heterodimer interface, leading to stabilization of the isocitrate-binding at the active site and thus activation of the enzyme. ATP can activate the heterotetramer and the heterodimer composed of IDH3A and IDH3G subunits at low concentrations but inhibits their activities at high concentrations, whereas ATP exhibits only inhibitory effect on the heterodimer composed of IDH3A and IDH3B subunits. Plays a structural role to facilitate the assembly and ensure the full activity of the enzyme catalyzing the decarboxylation of isocitrate (ICT) into alpha-ketoglutarate. The heterodimer composed of the alpha (IDH3A) and beta (IDH3B) subunits and the heterodimer composed of the alpha (IDH3A) and gamma (IDH3G) subunits, have considerable basal activity but the full activity of the heterotetramer (containing two subunits of IDH3A, one of IDH3B and one of IDH3G) requires the assembly and cooperative function of both heterodimers. The chain is Isocitrate dehydrogenase [NAD] subunit beta, mitochondrial (IDH3B) from Macaca fascicularis (Crab-eating macaque).